Here is a 32-residue protein sequence, read N- to C-terminus: Cytochrome b6-f complex subunit 7 (32 aa).

A helical transmembrane segment spans residues 9–27; that stretch reads AAVFWILIPIGLVGGALLL.

It belongs to the PetM family. In terms of assembly, the 4 large subunits of the cytochrome b6-f complex are cytochrome b6, subunit IV (17 kDa polypeptide, PetD), cytochrome f and the Rieske protein, while the 4 small subunits are PetG, PetL, PetM and PetN. The complex functions as a dimer.

The protein resides in the cellular thylakoid membrane. In terms of biological role, component of the cytochrome b6-f complex, which mediates electron transfer between photosystem II (PSII) and photosystem I (PSI), cyclic electron flow around PSI, and state transitions. The polypeptide is Cytochrome b6-f complex subunit 7 (Prochlorococcus marinus (strain MIT 9301)).